The primary structure comprises 314 residues: TPR repeat-containing protein MJ1345 (314 aa).

TPR repeat units follow at residues 12–45 (ESIL…RESP), 46–78 (DVYV…KPKY), 80–112 (LANF…EKSD), 114–146 (PVKY…YPKS), 147–180 (AIAW…NPKD), 182–214 (QSLL…NNKD), 215–248 (IRAL…NPDD), 249–282 (PLLY…NPNI), and 284–313 (DAWN…LDIY).

The polypeptide is TPR repeat-containing protein MJ1345 (Methanocaldococcus jannaschii (strain ATCC 43067 / DSM 2661 / JAL-1 / JCM 10045 / NBRC 100440) (Methanococcus jannaschii)).